A 1022-amino-acid chain; its full sequence is Antigenic heat-stable 120 kDa protein (1022 aa).

Residues 1–33 are disordered; sequence MSKNGNQDISEFDPLNREFTEAEKQQQMQQEQE. The segment covering 14-24 has biased composition (basic and acidic residues); it reads PLNREFTEAEK.

It localises to the cytoplasm. The protein is Antigenic heat-stable 120 kDa protein (sca4) of Rickettsia prowazekii (strain Madrid E).